A 465-amino-acid chain; its full sequence is Cysteine--tRNA ligase 2 (465 aa).

Cysteine 30 lines the Zn(2+) pocket. A 'HIGH' region motif is present at residues 32–42 (ITVYDYCHVGH). Cysteine 214, histidine 239, and glutamate 243 together coordinate Zn(2+). The short motif at 271–275 (KMSKS) is the 'KMSKS' region element. Lysine 274 contacts ATP.

Belongs to the class-I aminoacyl-tRNA synthetase family. As to quaternary structure, monomer. Zn(2+) is required as a cofactor.

Its subcellular location is the cytoplasm. It carries out the reaction tRNA(Cys) + L-cysteine + ATP = L-cysteinyl-tRNA(Cys) + AMP + diphosphate. The chain is Cysteine--tRNA ligase 2 from Burkholderia lata (strain ATCC 17760 / DSM 23089 / LMG 22485 / NCIMB 9086 / R18194 / 383).